A 70-amino-acid chain; its full sequence is Beta sliding clamp (70 aa).

The protein belongs to the beta sliding clamp family. Forms a ring-shaped head-to-tail homodimer around DNA which binds and tethers DNA polymerases and other proteins to the DNA. The DNA replisome complex has a single clamp-loading complex (3 tau and 1 each of delta, delta', psi and chi subunits) which binds 3 Pol III cores (1 core on the leading strand and 2 on the lagging strand) each with a beta sliding clamp dimer. Additional proteins in the replisome are other copies of gamma, psi and chi, Ssb, DNA helicase and RNA primase.

Its subcellular location is the cytoplasm. Functionally, confers DNA tethering and processivity to DNA polymerases and other proteins. Acts as a clamp, forming a ring around DNA (a reaction catalyzed by the clamp-loading complex) which diffuses in an ATP-independent manner freely and bidirectionally along dsDNA. Initially characterized for its ability to contact the catalytic subunit of DNA polymerase III (Pol III), a complex, multichain enzyme responsible for most of the replicative synthesis in bacteria; Pol III exhibits 3'-5' exonuclease proofreading activity. The beta chain is required for initiation of replication as well as for processivity of DNA replication. This Rhodobacter capsulatus (Rhodopseudomonas capsulata) protein is Beta sliding clamp (dnaN).